The sequence spans 529 residues: Corneodesmosin (529 aa).

Residues 1-32 (MGSSRAPWMGRVGGHGMMALLLAGLLLPGTLA) form the signal peptide. Disordered stretches follow at residues 38-248 (FSDP…SVSG) and 383-492 (GSTG…SSAG). 6 stretches are compositionally biased toward low complexity: residues 58 to 83 (GKGD…SARS), 90 to 100 (GSSSGSSIAQG), 111 to 175 (GYSQ…NGSA), 189 to 231 (PSQP…SGGP), 392 to 408 (SPSS…SSSS), and 426 to 441 (PGTG…QSSG). An N-linked (GlcNAc...) asparagine glycan is attached at asparagine 172. Positions 449 to 467 (GSKSSSSGHPCMSVSSLTL) are enriched in polar residues.

The protein resides in the secreted. Its function is as follows. Important for the epidermal barrier integrity. In Pan troglodytes (Chimpanzee), this protein is Corneodesmosin (CDSN).